An 80-amino-acid chain; its full sequence is RNA-binding protein Hfq (80 aa).

Positions 10-70 (DLFLNTVRKQ…ISTIMPGQPM (61 aa)) constitute a Sm domain.

The protein belongs to the Hfq family. Homohexamer.

In terms of biological role, RNA chaperone that binds small regulatory RNA (sRNAs) and mRNAs to facilitate mRNA translational regulation in response to envelope stress, environmental stress and changes in metabolite concentrations. Also binds with high specificity to tRNAs. The polypeptide is RNA-binding protein Hfq (Rhizobium etli (strain CIAT 652)).